The primary structure comprises 153 residues: UPF0179 protein AF_2154 (153 aa).

It belongs to the UPF0179 family.

The sequence is that of UPF0179 protein AF_2154 from Archaeoglobus fulgidus (strain ATCC 49558 / DSM 4304 / JCM 9628 / NBRC 100126 / VC-16).